The sequence spans 133 residues: Small ribosomal subunit protein uS8 (133 aa).

The protein belongs to the universal ribosomal protein uS8 family. Part of the 30S ribosomal subunit. Contacts proteins S5 and S12.

Functionally, one of the primary rRNA binding proteins, it binds directly to 16S rRNA central domain where it helps coordinate assembly of the platform of the 30S subunit. This is Small ribosomal subunit protein uS8 from Chlamydia trachomatis serovar A (strain ATCC VR-571B / DSM 19440 / HAR-13).